The sequence spans 156 residues: Cyanate hydratase (156 aa).

Residues Arg96, Glu99, and Ser122 contribute to the active site.

The protein belongs to the cyanase family.

It catalyses the reaction cyanate + hydrogencarbonate + 3 H(+) = NH4(+) + 2 CO2. Catalyzes the reaction of cyanate with bicarbonate to produce ammonia and carbon dioxide. This is Cyanate hydratase from Photorhabdus laumondii subsp. laumondii (strain DSM 15139 / CIP 105565 / TT01) (Photorhabdus luminescens subsp. laumondii).